A 386-amino-acid polypeptide reads, in one-letter code: S-adenosylmethionine synthase (386 aa).

Residue H16 coordinates ATP. D18 contributes to the Mg(2+) binding site. E44 lines the K(+) pocket. Residues E57 and Q100 each contribute to the L-methionine site. The interval 100–110 is flexible loop; that stretch reads QSPDINQGVDR. ATP contacts are provided by residues 164–166, 230–231, D239, 245–246, A262, and K266; these read DGK, KF, and RK. L-methionine is bound at residue D239. K270 lines the L-methionine pocket.

Belongs to the AdoMet synthase family. In terms of assembly, homotetramer; dimer of dimers. Mg(2+) is required as a cofactor. The cofactor is K(+).

The protein localises to the cytoplasm. The catalysed reaction is L-methionine + ATP + H2O = S-adenosyl-L-methionine + phosphate + diphosphate. Its pathway is amino-acid biosynthesis; S-adenosyl-L-methionine biosynthesis; S-adenosyl-L-methionine from L-methionine: step 1/1. Catalyzes the formation of S-adenosylmethionine (AdoMet) from methionine and ATP. The overall synthetic reaction is composed of two sequential steps, AdoMet formation and the subsequent tripolyphosphate hydrolysis which occurs prior to release of AdoMet from the enzyme. The chain is S-adenosylmethionine synthase from Helicobacter hepaticus (strain ATCC 51449 / 3B1).